A 291-amino-acid chain; its full sequence is 4-diphosphocytidyl-2-C-methyl-D-erythritol kinase (291 aa).

Lys-11 is a catalytic residue. An ATP-binding site is contributed by 95–105 (PVAAGLAGGSS). The active site involves Asp-137.

It belongs to the GHMP kinase family. IspE subfamily.

The catalysed reaction is 4-CDP-2-C-methyl-D-erythritol + ATP = 4-CDP-2-C-methyl-D-erythritol 2-phosphate + ADP + H(+). It participates in isoprenoid biosynthesis; isopentenyl diphosphate biosynthesis via DXP pathway; isopentenyl diphosphate from 1-deoxy-D-xylulose 5-phosphate: step 3/6. In terms of biological role, catalyzes the phosphorylation of the position 2 hydroxy group of 4-diphosphocytidyl-2C-methyl-D-erythritol. This is 4-diphosphocytidyl-2-C-methyl-D-erythritol kinase from Alkaliphilus metalliredigens (strain QYMF).